A 158-amino-acid polypeptide reads, in one-letter code: Transcriptional repressor NrdR (158 aa).

The tract at residues 1–22 (MRCPFCGSDDTQVKDSRPAEDN) is disordered. A zinc finger spans residues 3–34 (CPFCGSDDTQVKDSRPAEDNSAIRRRRICPDC). Residues 11 to 22 (TQVKDSRPAEDN) are compositionally biased toward basic and acidic residues. The 91-residue stretch at 49–139 (LTVLKKTGRK…VYRDFSHAED (91 aa)) folds into the ATP-cone domain.

It belongs to the NrdR family. Zn(2+) is required as a cofactor.

Its function is as follows. Negatively regulates transcription of bacterial ribonucleotide reductase nrd genes and operons by binding to NrdR-boxes. This is Transcriptional repressor NrdR from Allorhizobium ampelinum (strain ATCC BAA-846 / DSM 112012 / S4) (Agrobacterium vitis (strain S4)).